A 103-amino-acid polypeptide reads, in one-letter code: NADH-ubiquinone oxidoreductase chain 4L (103 aa).

3 consecutive transmembrane segments (helical) span residues I6–I26, I31–I51, and I65–I85.

The protein belongs to the complex I subunit 4L family.

It localises to the mitochondrion membrane. The catalysed reaction is a ubiquinone + NADH + 5 H(+)(in) = a ubiquinol + NAD(+) + 4 H(+)(out). In terms of biological role, core subunit of the mitochondrial membrane respiratory chain NADH dehydrogenase (Complex I) that is believed to belong to the minimal assembly required for catalysis. Complex I functions in the transfer of electrons from NADH to the respiratory chain. The immediate electron acceptor for the enzyme is believed to be ubiquinone. This chain is NADH-ubiquinone oxidoreductase chain 4L (ND4L), found in Acanthamoeba castellanii (Amoeba).